The sequence spans 154 residues: 6,7-dimethyl-8-ribityllumazine synthase (154 aa).

5-amino-6-(D-ribitylamino)uracil-binding positions include F22, 56–58, and 81–83; these read SFE and VLI. 86-87 contributes to the (2S)-2-hydroxy-3-oxobutyl phosphate binding site; it reads ET. Catalysis depends on H89, which acts as the Proton donor. F114 provides a ligand contact to 5-amino-6-(D-ribitylamino)uracil. R128 contacts (2S)-2-hydroxy-3-oxobutyl phosphate.

This sequence belongs to the DMRL synthase family.

The catalysed reaction is (2S)-2-hydroxy-3-oxobutyl phosphate + 5-amino-6-(D-ribitylamino)uracil = 6,7-dimethyl-8-(1-D-ribityl)lumazine + phosphate + 2 H2O + H(+). It functions in the pathway cofactor biosynthesis; riboflavin biosynthesis; riboflavin from 2-hydroxy-3-oxobutyl phosphate and 5-amino-6-(D-ribitylamino)uracil: step 1/2. Catalyzes the formation of 6,7-dimethyl-8-ribityllumazine by condensation of 5-amino-6-(D-ribitylamino)uracil with 3,4-dihydroxy-2-butanone 4-phosphate. This is the penultimate step in the biosynthesis of riboflavin. The sequence is that of 6,7-dimethyl-8-ribityllumazine synthase from Chlamydia caviae (strain ATCC VR-813 / DSM 19441 / 03DC25 / GPIC) (Chlamydophila caviae).